Here is a 337-residue protein sequence, read N- to C-terminus: Terpene synthase 4 (337 aa).

Positions 94 and 98 each coordinate Mg(2+). Positions 94–98 match the D(D/E)XX(D/E) motif motif; it reads DDIFD. A substrate-binding site is contributed by arginine 195. Mg(2+) is bound by residues asparagine 241, serine 245, and glutamate 249. Residues 241–249 carry the NSE motif motif; that stretch reads NDIYSYHRE. The WxxxxxRY motif signature appears at 320–327; the sequence is WSESCTRY.

This sequence belongs to the terpene synthase family. It depends on Mg(2+) as a cofactor.

The enzyme catalyses (2E,6E)-farnesyl diphosphate = alpha-muurolene + diphosphate. The catalysed reaction is (2E,6E)-farnesyl diphosphate = (-)-(E)-beta-caryophyllene + diphosphate. In terms of biological role, terpene synthase that catalyzes the cyclization of farnesyl diphosphate (FPP) into alpha-muurolene, (-)-beta-caryophyllene, and one unidentified sesquiterpene. TPS4 shows only trace monoterpene synthase activity with geranyl diphosphate (GPP) as substrate and produces very small amounts of myrcene. P.polycephalum has a unique biology and these volatile terpenoids could function in internal communication of P.polycephalum, to mark the territory that have been explored, or they may be involved in chemotaxis. The sequence is that of Terpene synthase 4 from Physarum polycephalum (Slime mold).